The chain runs to 285 residues: Energy-coupling factor transporter ATP-binding protein EcfA2 (285 aa).

An ABC transporter domain is found at 3 to 245; it reads INFEQVNFSY…DLVWFKTVAL (243 aa). 40–47 provides a ligand contact to ATP; the sequence is GQTGSGKS. Catalysis depends on glutamate 171, which acts as the Proton acceptor.

It belongs to the ABC transporter superfamily. Energy-coupling factor EcfA family. As to quaternary structure, forms a stable energy-coupling factor (ECF) transporter complex probably composed of 2 membrane-embedded substrate-binding proteins (S component), 2 ATP-binding proteins (A component) and 2 transmembrane proteins (T component). This complex interacts with a number of substrate-specific components, including FolT, PanT and RibU for 5-formyltetrahydrofolate, pantothenate and riboflavin respectively.

It localises to the cell membrane. Functionally, ATP-binding (A) component of a common energy-coupling factor (ECF) ABC-transporter complex. Unlike classic ABC transporters this ECF transporter provides the energy necessary to transport a number of different substrates including 5-formyltetrahydrofolate, pantothenate and riboflavin. Expression of the complex plus FolT in E.coli allows 5-formyltetrahydrofolate uptake; 5-formyltetrahydrofolate is not taken up in the absence of FolT or the EcfA1A2T complex. The protein is Energy-coupling factor transporter ATP-binding protein EcfA2 of Leuconostoc mesenteroides subsp. mesenteroides (strain ATCC 8293 / DSM 20343 / BCRC 11652 / CCM 1803 / JCM 6124 / NCDO 523 / NBRC 100496 / NCIMB 8023 / NCTC 12954 / NRRL B-1118 / 37Y).